Here is a 418-residue protein sequence, read N- to C-terminus: Serine hydroxymethyltransferase 2 (418 aa).

Residues Leu121 and 125 to 127 (GHL) each bind (6S)-5,6,7,8-tetrahydrofolate. Lys230 is modified (N6-(pyridoxal phosphate)lysine). 355–357 (SPF) is a binding site for (6S)-5,6,7,8-tetrahydrofolate.

It belongs to the SHMT family. As to quaternary structure, homodimer. It depends on pyridoxal 5'-phosphate as a cofactor.

The protein resides in the cytoplasm. The enzyme catalyses (6R)-5,10-methylene-5,6,7,8-tetrahydrofolate + glycine + H2O = (6S)-5,6,7,8-tetrahydrofolate + L-serine. The protein operates within one-carbon metabolism; tetrahydrofolate interconversion. It participates in amino-acid biosynthesis; glycine biosynthesis; glycine from L-serine: step 1/1. In terms of biological role, catalyzes the reversible interconversion of serine and glycine with tetrahydrofolate (THF) serving as the one-carbon carrier. This reaction serves as the major source of one-carbon groups required for the biosynthesis of purines, thymidylate, methionine, and other important biomolecules. Also exhibits THF-independent aldolase activity toward beta-hydroxyamino acids, producing glycine and aldehydes, via a retro-aldol mechanism. The sequence is that of Serine hydroxymethyltransferase 2 from Pseudomonas aeruginosa (strain ATCC 15692 / DSM 22644 / CIP 104116 / JCM 14847 / LMG 12228 / 1C / PRS 101 / PAO1).